The sequence spans 357 residues: Holliday junction branch migration complex subunit RuvB (357 aa).

The large ATPase domain (RuvB-L) stretch occupies residues 4–195; it reads TDKLAAKAVS…FGIVARLEFY (192 aa). ATP contacts are provided by residues L34, R35, G76, K79, T80, T81, 142–144, R185, Y195, and R232; that span reads EDY. T80 lines the Mg(2+) pocket. Positions 196–266 are small ATPAse domain (RuvB-S); it reads TPTELARIVT…VADAALAMLD (71 aa). The interval 269-357 is head domain (RuvB-H); sequence AVGFDLMDRK…PARDLWDNNA (89 aa). DNA-binding residues include R305, R324, and R329.

This sequence belongs to the RuvB family. Homohexamer. Forms an RuvA(8)-RuvB(12)-Holliday junction (HJ) complex. HJ DNA is sandwiched between 2 RuvA tetramers; dsDNA enters through RuvA and exits via RuvB. An RuvB hexamer assembles on each DNA strand where it exits the tetramer. Each RuvB hexamer is contacted by two RuvA subunits (via domain III) on 2 adjacent RuvB subunits; this complex drives branch migration. In the full resolvosome a probable DNA-RuvA(4)-RuvB(12)-RuvC(2) complex forms which resolves the HJ.

The protein resides in the cytoplasm. The catalysed reaction is ATP + H2O = ADP + phosphate + H(+). Its function is as follows. The RuvA-RuvB-RuvC complex processes Holliday junction (HJ) DNA during genetic recombination and DNA repair, while the RuvA-RuvB complex plays an important role in the rescue of blocked DNA replication forks via replication fork reversal (RFR). RuvA specifically binds to HJ cruciform DNA, conferring on it an open structure. The RuvB hexamer acts as an ATP-dependent pump, pulling dsDNA into and through the RuvAB complex. RuvB forms 2 homohexamers on either side of HJ DNA bound by 1 or 2 RuvA tetramers; 4 subunits per hexamer contact DNA at a time. Coordinated motions by a converter formed by DNA-disengaged RuvB subunits stimulates ATP hydrolysis and nucleotide exchange. Immobilization of the converter enables RuvB to convert the ATP-contained energy into a lever motion, pulling 2 nucleotides of DNA out of the RuvA tetramer per ATP hydrolyzed, thus driving DNA branch migration. The RuvB motors rotate together with the DNA substrate, which together with the progressing nucleotide cycle form the mechanistic basis for DNA recombination by continuous HJ branch migration. Branch migration allows RuvC to scan DNA until it finds its consensus sequence, where it cleaves and resolves cruciform DNA. This chain is Holliday junction branch migration complex subunit RuvB, found in Ralstonia nicotianae (strain ATCC BAA-1114 / GMI1000) (Ralstonia solanacearum).